A 403-amino-acid polypeptide reads, in one-letter code: Tryptophan synthase beta chain (403 aa).

Lys-93 bears the N6-(pyridoxal phosphate)lysine mark.

It belongs to the TrpB family. In terms of assembly, tetramer of two alpha and two beta chains. The cofactor is pyridoxal 5'-phosphate.

The enzyme catalyses (1S,2R)-1-C-(indol-3-yl)glycerol 3-phosphate + L-serine = D-glyceraldehyde 3-phosphate + L-tryptophan + H2O. It functions in the pathway amino-acid biosynthesis; L-tryptophan biosynthesis; L-tryptophan from chorismate: step 5/5. Its function is as follows. The beta subunit is responsible for the synthesis of L-tryptophan from indole and L-serine. This is Tryptophan synthase beta chain from Acinetobacter baylyi (strain ATCC 33305 / BD413 / ADP1).